We begin with the raw amino-acid sequence, 390 residues long: Acetylornithine aminotransferase (390 aa).

Pyridoxal 5'-phosphate is bound by residues 103–104 (GT) and Phe129. Arg132 lines the N(2)-acetyl-L-ornithine pocket. A pyridoxal 5'-phosphate-binding site is contributed by 214–217 (DEVQ). Lys243 carries the post-translational modification N6-(pyridoxal phosphate)lysine. Residue Ser271 participates in N(2)-acetyl-L-ornithine binding. A pyridoxal 5'-phosphate-binding site is contributed by Thr272. Residue Lys304 forms an Isoglutamyl lysine isopeptide (Lys-Gln) (interchain with Q-Cter in protein Pup) linkage.

Belongs to the class-III pyridoxal-phosphate-dependent aminotransferase family. ArgD subfamily. In terms of assembly, homodimer. Pyridoxal 5'-phosphate serves as cofactor.

The protein localises to the cytoplasm. The catalysed reaction is N(2)-acetyl-L-ornithine + 2-oxoglutarate = N-acetyl-L-glutamate 5-semialdehyde + L-glutamate. The protein operates within amino-acid biosynthesis; L-arginine biosynthesis; N(2)-acetyl-L-ornithine from L-glutamate: step 4/4. The sequence is that of Acetylornithine aminotransferase from Mycolicibacterium smegmatis (strain ATCC 700084 / mc(2)155) (Mycobacterium smegmatis).